A 180-amino-acid chain; its full sequence is Alpha-S2-casein-like A (180 aa).

The signal sequence occupies residues 1–15; sequence MRFFVFTCLLAVALA. S23 and S25 each carry phosphoserine. Residues 46–66 form a disordered region; sequence PTNQETPSVSSSEESVEVQTE.

Belongs to the alpha-casein family. Mammary gland specific. Secreted in milk.

Its subcellular location is the secreted. Important role in the capacity of milk to transport calcium phosphate. This Oryctolagus cuniculus (Rabbit) protein is Alpha-S2-casein-like A (CSN1S2A).